A 451-amino-acid polypeptide reads, in one-letter code: Phosphoglucosamine mutase (451 aa).

The Phosphoserine intermediate role is filled by Ser101. Residues Ser101, Asp240, Asp242, and Asp244 each contribute to the Mg(2+) site. Ser101 bears the Phosphoserine mark.

This sequence belongs to the phosphohexose mutase family. Mg(2+) serves as cofactor. Post-translationally, activated by phosphorylation.

It catalyses the reaction alpha-D-glucosamine 1-phosphate = D-glucosamine 6-phosphate. Catalyzes the conversion of glucosamine-6-phosphate to glucosamine-1-phosphate. The polypeptide is Phosphoglucosamine mutase (Streptococcus pyogenes serotype M1).